The following is a 276-amino-acid chain: Undecaprenyl-diphosphatase 2 (276 aa).

Helical transmembrane passes span 1–21 (MSLW…LFPV), 44–64 (QLLP…LWYF), 87–107 (GHLM…GLLL), 114–134 (VFHD…LLWL), 150–170 (MTFK…IPGF), 190–210 (AAEF…VLEL), 222–242 (DALL…RFLM), and 251–271 (LASF…WFML).

It belongs to the UppP family.

It localises to the cell inner membrane. The catalysed reaction is di-trans,octa-cis-undecaprenyl diphosphate + H2O = di-trans,octa-cis-undecaprenyl phosphate + phosphate + H(+). In terms of biological role, catalyzes the dephosphorylation of undecaprenyl diphosphate (UPP). Confers resistance to bacitracin. This chain is Undecaprenyl-diphosphatase 2, found in Burkholderia orbicola (strain AU 1054).